A 1056-amino-acid chain; its full sequence is Carbamoyl phosphate synthase large chain (1056 aa).

The segment at 1–399 (MKIDVSKVIV…AFQKAIRMLD (399 aa)) is carboxyphosphate synthetic domain. Residues R127, R167, G173, G174, K206, L208, E213, G239, V240, H241, Q282, and E296 each coordinate ATP. Residues 131–325 (QKTMKKVGLP…LAYIATKLAI (195 aa)) form the ATP-grasp 1 domain. Residues Q282, E296, and N298 each contribute to the Mg(2+) site. Residues Q282, E296, and N298 each coordinate Mn(2+). Residues 400 to 536 (IGDELIGKYY…VTYDGVENDI (137 aa)) form an oligomerization domain region. The carbamoyl phosphate synthetic domain stretch occupies residues 537–919 (PKPKKPSILV…LKSWLSVKPN (383 aa)). Positions 661-849 (SKLLEKLGIP…LMELSAQAVL (189 aa)) constitute an ATP-grasp 2 domain. The ATP site is built by R697, K736, I738, E742, G766, V767, H768, S769, Q809, and E820. Mg(2+) is bound by residues Q809, E820, and N822. Residues Q809, E820, and N822 each contribute to the Mn(2+) site. Positions 915–1043 (SVKPNELPKT…REYWIRKIEE (129 aa)) constitute an MGS-like domain. The allosteric domain stretch occupies residues 920–1056 (ELPKTSALIY…EYAASVVLRR (137 aa)).

The protein belongs to the CarB family. As to quaternary structure, composed of two chains; the small (or glutamine) chain promotes the hydrolysis of glutamine to ammonia, which is used by the large (or ammonia) chain to synthesize carbamoyl phosphate. Tetramer of heterodimers (alpha,beta)4. Requires Mg(2+) as cofactor. It depends on Mn(2+) as a cofactor.

It catalyses the reaction hydrogencarbonate + L-glutamine + 2 ATP + H2O = carbamoyl phosphate + L-glutamate + 2 ADP + phosphate + 2 H(+). The catalysed reaction is hydrogencarbonate + NH4(+) + 2 ATP = carbamoyl phosphate + 2 ADP + phosphate + 2 H(+). Its pathway is amino-acid biosynthesis; L-arginine biosynthesis; carbamoyl phosphate from bicarbonate: step 1/1. It participates in pyrimidine metabolism; UMP biosynthesis via de novo pathway; (S)-dihydroorotate from bicarbonate: step 1/3. Functionally, large subunit of the glutamine-dependent carbamoyl phosphate synthetase (CPSase). CPSase catalyzes the formation of carbamoyl phosphate from the ammonia moiety of glutamine, carbonate, and phosphate donated by ATP, constituting the first step of 2 biosynthetic pathways, one leading to arginine and/or urea and the other to pyrimidine nucleotides. The large subunit (synthetase) binds the substrates ammonia (free or transferred from glutamine from the small subunit), hydrogencarbonate and ATP and carries out an ATP-coupled ligase reaction, activating hydrogencarbonate by forming carboxy phosphate which reacts with ammonia to form carbamoyl phosphate. This chain is Carbamoyl phosphate synthase large chain, found in Pyrococcus furiosus (strain ATCC 43587 / DSM 3638 / JCM 8422 / Vc1).